The following is a 439-amino-acid chain: Lactamase-like protein nscB (439 aa).

Zn(2+) contacts are provided by His214, His216, Asp218, and His219. The active-site Proton donor/acceptor is the Asp218.

It belongs to the metallo-beta-lactamase superfamily. The cofactor is Zn(2+).

It functions in the pathway secondary metabolite biosynthesis. Functionally, lactamase-like protein; part of the gene cluster that mediates the biosynthesis of neosartoricin B, a prenylated anthracenone that probably exhibits T-cell antiproliferative activity, suggestive of a physiological role as an immunosuppressive agent. The non-reducing polyketide synthase nscA probably synthesizes and cyclizes the decaketide backbone. The hydrolase nscB then mediates the product release through hydrolysis followed by spontaneous decarboxylation. The prenyltransferase nscD catalyzes the addition of the dimethylallyl group to the aromatic C5. The FAD-dependent monooxygenase nscC is then responsible for the stereospecific hydroxylation at C2. Neosartoricin B can be converted into two additional compounds neosartoricins C and D. Neosartoricin C is a spirocyclic compound that is cyclized through the attack of C3 hydroxyl on C14, followed by dehydration. On the other hand, neosartoricin D is a further cyclized compound in which attack of C2 on C14 in neosartoricin C results in the formation of the acetal-containing dioxabicyclo-octanone ring. Both of these compounds are novel and possibly represent related metabolites of the gene cluster. This chain is Lactamase-like protein nscB, found in Arthroderma benhamiae (strain ATCC MYA-4681 / CBS 112371) (Trichophyton mentagrophytes).